A 719-amino-acid chain; its full sequence is DNA polymerase epsilon subunit B (719 aa).

The tract at residues 107–147 (SIPPKTKTYNNGGGKTTTIDRFLTKRPSPSDNDEGPLDQSI) is disordered.

It belongs to the DNA polymerase epsilon subunit B family. Heterotetramer. Consists of four subunits: POL2, DPB2, DPB3 and DPB4.

It is found in the nucleus. In terms of biological role, as accessory component of the DNA polymerase epsilon (DNA polymerase II) participates in chromosomal DNA replication. The chain is DNA polymerase epsilon subunit B (DPB2) from Candida glabrata (strain ATCC 2001 / BCRC 20586 / JCM 3761 / NBRC 0622 / NRRL Y-65 / CBS 138) (Yeast).